The chain runs to 32 residues: Cytochrome b6-f complex subunit 7 (32 aa).

The helical transmembrane segment at 9-27 (AALFWVLIPLGLAGGALLL) threads the bilayer.

This sequence belongs to the PetM family. In terms of assembly, the 4 large subunits of the cytochrome b6-f complex are cytochrome b6, subunit IV (17 kDa polypeptide, PetD), cytochrome f and the Rieske protein, while the 4 small subunits are PetG, PetL, PetM and PetN. The complex functions as a dimer.

The protein resides in the cellular thylakoid membrane. Functionally, component of the cytochrome b6-f complex, which mediates electron transfer between photosystem II (PSII) and photosystem I (PSI), cyclic electron flow around PSI, and state transitions. In Synechococcus sp. (strain RCC307), this protein is Cytochrome b6-f complex subunit 7.